The chain runs to 318 residues: Oxidoreductase swnN (318 aa).

It belongs to the NmrA-type oxidoreductase family. Isoflavone reductase subfamily.

The protein operates within mycotoxin biosynthesis. In terms of biological role, aminotransferase; part of the gene cluster that mediates the biosynthesis of swainsonine (SW), a cytotoxic fungal alkaloid and a potential cancer therapy drug. Swainsonine production occurs via a multibranched pathway and is dispensable for fungal colonization of plants and infection of insect hosts. The first step of swainsonine biosynthesis is the production of the precursor pipecolic acid (PA) via conversion of L-lysine (Lys) to 1-piperideine-6-carboxylate (P6C) by the aminotransferase swnA, the latter being further reduced to PA by the reductase swnR. The PKS-NRPS hybrid synthetase swnK uptakes and condensates PA and malonyl-CoA with and without skipping of the ketoreductase (KR) domain in order to produce 3 intermediates, 1-oxoindolizidine, (1S)-1-hydroxyindolizin, and (1R)-1-hydroxyindolizine; with the transisomer (1S)-1-hydroxyindolizin being predominant. The terminal thioester reductase (TE) domain of swnK is involved in reduction of the thioester bond to release the intermediate aldehydes. The oxidoreductase swnN could contribute to the reduction of 1-oxoindolizidine to (1S)-1-hydroxyindolizin and (1R)-1-hydroxyindolizine, contributing to the major route of SW production. The dioxygenase swnH2 would be responsible for the oxidization of (1R)-1-hydroxyindolizine into (1R,2S)-1,2-dihydroxyindolizine and of (1S)-1-hydroxyindolizin to yield both (1R,2S)-1,2-dihydroxyindolizine and (1S,2S)-1,2-dihydroxyindolizine. The dioxygenase swnH1 then performs the conversion of the 1,2-dihydroxyindolizine epimers to SW. In Arthroderma benhamiae (strain ATCC MYA-4681 / CBS 112371) (Trichophyton mentagrophytes), this protein is Oxidoreductase swnN.